Here is a 759-residue protein sequence, read N- to C-terminus: Rho GTPase-activating protein 26 (759 aa).

A BAR domain is found at 7 to 262 (EFSDCYLDSP…MKENPHEHLA (256 aa)). The region spanning 265 to 369 (PYTMEGYLYV…WMEAMDGREP (105 aa)) is the PH domain. One can recognise a Rho-GAP domain in the interval 383–568 (AQLDNIGFSI…IIIENYEKMF (186 aa)). The disordered stretch occupies residues 578–701 (NSQLHLSRKR…STSSDSSPVS (124 aa)). The segment covering 608–617 (HNTEKEEKRN) has biased composition (basic and acidic residues). A compositionally biased stretch (low complexity) spans 618–637 (SVNSSAESVSSSNANSSANS). Residues 638 to 650 (TCTQCSNMNNLNA) show a composition bias toward polar residues. Residues 679 to 701 (PMFSAPSSPMPTSSTSSDSSPVS) show a composition bias toward low complexity. Positions 701–759 (SVPRKAKALYACKAEHDSELSFSAGTVFDNVYPSQEPGWLEGILNGKTGLIPENYVEFL) constitute an SH3 domain.

It localises to the cell junction. The protein resides in the focal adhesion. The protein localises to the cytoplasm. Its subcellular location is the cytoskeleton. It is found in the endosome membrane. In terms of biological role, GTPase-activating protein for rhoa and cdc42. The chain is Rho GTPase-activating protein 26 (arhgap26) from Xenopus tropicalis (Western clawed frog).